We begin with the raw amino-acid sequence, 304 residues long: UDP-N-acetylenolpyruvoylglucosamine reductase (304 aa).

One can recognise an FAD-binding PCMH-type domain in the interval 31 to 196 (KVGGPADYLA…ISAKFNLKPG (166 aa)). Residue arginine 175 is part of the active site. Serine 225 acts as the Proton donor in catalysis. Glutamate 295 is a catalytic residue.

The protein belongs to the MurB family. It depends on FAD as a cofactor.

The protein resides in the cytoplasm. It catalyses the reaction UDP-N-acetyl-alpha-D-muramate + NADP(+) = UDP-N-acetyl-3-O-(1-carboxyvinyl)-alpha-D-glucosamine + NADPH + H(+). It functions in the pathway cell wall biogenesis; peptidoglycan biosynthesis. Its function is as follows. Cell wall formation. This Streptococcus thermophilus (strain ATCC BAA-491 / LMD-9) protein is UDP-N-acetylenolpyruvoylglucosamine reductase.